A 171-amino-acid polypeptide reads, in one-letter code: MRMNLKKLIINSLFLAVGVVLNQITPPILFGMKPDFSLAMLFIIILLNDDYKTCISTGVVAGLLAAAVTTFPGGQLPNIIDRIVTTSLVFIALRPFKDKINDKIHMIITTIVGTIISGSVFLGSALIIVGLPASFKALFITVVLPATIINAIVGTIIFVAVKKSMRVVFRQ.

4 helical membrane passes run 9–31, 58–80, 107–129, and 139–161; these read IINS…ILFG, GVVA…PNII, IITT…LIIV, and FITV…FVAV.

Belongs to the vitamin uptake transporter (VUT/ECF) (TC 2.A.88) family. TrpP subfamily.

The protein resides in the cell membrane. In terms of biological role, probably involved in tryptophan uptake. In Clostridium acetobutylicum (strain ATCC 824 / DSM 792 / JCM 1419 / IAM 19013 / LMG 5710 / NBRC 13948 / NRRL B-527 / VKM B-1787 / 2291 / W), this protein is Probable tryptophan transport protein (trpP).